The sequence spans 293 residues: Transcription initiation factor IIB 2 (293 aa).

Residues 1–31 (MKCPYCKTDNAITYDVEKGMYVCTNCASVIE) form a TFIIB-type zinc finger. 4 residues coordinate Zn(2+): Cys3, Cys6, Cys23, and Cys26. 2 consecutive repeat copies span residues 107–193 (SILN…ANSI) and 204–285 (EYIP…DIVD).

It belongs to the TFIIB family.

Its function is as follows. Stabilizes TBP binding to an archaeal box-A promoter. Also responsible for recruiting RNA polymerase II to the pre-initiation complex (DNA-TBP-TFIIB). The chain is Transcription initiation factor IIB 2 from Saccharolobus solfataricus (strain ATCC 35092 / DSM 1617 / JCM 11322 / P2) (Sulfolobus solfataricus).